Reading from the N-terminus, the 363-residue chain is Ribosome-binding ATPase YchF (363 aa).

Residues 3-256 (FKCGIVGLPN…LDDEERDEFM (254 aa)) form the OBG-type G domain. 12–17 (NVGKST) lines the ATP pocket. Mg(2+) is bound by residues Ser-16 and Thr-36. Positions 278–361 (NLQTYFTAGV…KDGDVMNFLF (84 aa)) constitute a TGS domain.

It belongs to the TRAFAC class OBG-HflX-like GTPase superfamily. OBG GTPase family. YchF/OLA1 subfamily. Mg(2+) is required as a cofactor.

Functionally, ATPase that binds to both the 70S ribosome and the 50S ribosomal subunit in a nucleotide-independent manner. In Escherichia coli O157:H7, this protein is Ribosome-binding ATPase YchF.